We begin with the raw amino-acid sequence, 202 residues long: Regulator of G-protein signaling 16 (202 aa).

Residues Cys-2 and Cys-12 are each lipidated (S-palmitoyl cysteine). In terms of domain architecture, RGS spans 65 to 181 (SFDLLLSSKN…LKSPAYRDLA (117 aa)). The residue at position 168 (Tyr-168) is a Phosphotyrosine; by EGFR. Tyr-177 bears the Phosphotyrosine mark.

Interacts with GNAI1 and GNAQ. Interacts with GNAI2, GNAI3 and GNAO1. In terms of processing, palmitoylated on Cys-2 and/or Cys-12. Post-translationally, phosphorylated. Phosphorylation at Tyr-168 by EGFR enhances GTPase accelerating (GAP) activity toward GNAI1. Abundantly expressed in retina with lower levels of expression in most other tissues.

The protein resides in the membrane. Functionally, regulates G protein-coupled receptor signaling cascades. Inhibits signal transduction by increasing the GTPase activity of G protein alpha subunits, thereby driving them into their inactive GDP-bound form. Plays an important role in the phototransduction cascade by regulating the lifetime and effective concentration of activated transducin alpha. May regulate extra and intracellular mitogenic signals. This chain is Regulator of G-protein signaling 16 (RGS16), found in Homo sapiens (Human).